Here is a 778-residue protein sequence, read N- to C-terminus: Degenerin deg-1 (778 aa).

Topologically, residues 1-82 are cytoplasmic; sequence MSNHHSKTKK…IARNSFSKLM (82 aa). Residues 83–103 form a helical membrane-spanning segment; sequence WGLIIFSFLLMFAYQASKLIF. Over 104-711 the chain is Extracellular; sequence KFSAHEKITD…LVNLIADFGG (608 aa). Basic and acidic residues predominate over residues 154–165; sequence NAKTHSKSEGEK. Disordered regions lie at residues 154–180 and 201–220; these read NAKT…DASQ and SNKT…QRSI. Asn202, Asn209, Asn272, and Asn342 each carry an N-linked (GlcNAc...) asparagine glycan. Low complexity predominate over residues 346–369; sequence TSTTTTTTTTPPPTTTSTTTTTTT. The tract at residues 346–380 is disordered; that stretch reads TSTTTTTTTTPPPTTTSTTTTTTTTPPPTTTARPN. N-linked (GlcNAc...) asparagine glycosylation is found at Asn473, Asn492, and Asn606. The helical transmembrane segment at 712–732 threads the bilayer; that stretch reads HLGLWLGFSVITVMEVCVLLV. Topologically, residues 733–778 are cytoplasmic; that stretch reads DMISLFFKSRHEEKLLRQSTKRKDVPEDKRQITVGSGRKSDAFVSI.

This sequence belongs to the amiloride-sensitive sodium channel (TC 1.A.6) family.

It is found in the membrane. In terms of biological role, probable sodium channel subunit. Required by a subset of neurons. The sequence is that of Degenerin deg-1 from Caenorhabditis elegans.